The sequence spans 843 residues: Protein P (843 aa).

The tract at residues 1–177 (MPLSYQHFRK…FCGSPYSWEQ (177 aa)) is terminal protein domain (TP). The tract at residues 178 to 346 (ELQHGRLVFQ…YCLSHLINLH (169 aa)) is spacer. Disordered stretches follow at residues 218–243 (LKQSRLGLQPQQGSLARGKSGRSGSI) and 291–315 (TAQRHSPSGHAVEFHSIPPSSAGSQ). Residues 347–690 (EDWGPCIEHG…YLNLYPVARQ (344 aa)) form a polymerase/reverse transcriptase domain (RT) region. Residues 357-600 (EHNIRIPRTP…YSLNFMGYVI (244 aa)) form the Reverse transcriptase domain. Residues D429, D551, and D552 each contribute to the Mg(2+) site.

It belongs to the hepadnaviridae P protein family.

It carries out the reaction DNA(n) + a 2'-deoxyribonucleoside 5'-triphosphate = DNA(n+1) + diphosphate. The enzyme catalyses Endonucleolytic cleavage to 5'-phosphomonoester.. Its activity is regulated as follows. Activated by host HSP70 and HSP40 in vitro to be able to bind the epsilon loop of the pgRNA. Because deletion of the RNase H region renders the protein partly chaperone-independent, the chaperones may be needed indirectly to relieve occlusion of the RNA-binding site by this domain. Inhibited by several reverse-transcriptase inhibitors: Lamivudine, Adefovir and Entecavir. In terms of biological role, multifunctional enzyme that converts the viral RNA genome into dsDNA in viral cytoplasmic capsids. This enzyme displays a DNA polymerase activity that can copy either DNA or RNA templates, and a ribonuclease H (RNase H) activity that cleaves the RNA strand of RNA-DNA heteroduplexes in a partially processive 3'- to 5'-endonucleasic mode. Neo-synthesized pregenomic RNA (pgRNA) are encapsidated together with the P protein, and reverse-transcribed inside the nucleocapsid. Initiation of reverse-transcription occurs first by binding the epsilon loop on the pgRNA genome, and is initiated by protein priming, thereby the 5'-end of (-)DNA is covalently linked to P protein. Partial (+)DNA is synthesized from the (-)DNA template and generates the relaxed circular DNA (RC-DNA) genome. After budding and infection, the RC-DNA migrates in the nucleus, and is converted into a plasmid-like covalently closed circular DNA (cccDNA). The activity of P protein does not seem to be necessary for cccDNA generation, and is presumably released from (+)DNA by host nuclear DNA repair machinery. This chain is Protein P, found in Hepatitis B virus genotype C subtype ayw (isolate Australia/AustRC/1992) (HBV-C).